The chain runs to 117 residues: Large ribosomal subunit protein eL18 (117 aa).

Belongs to the eukaryotic ribosomal protein eL18 family.

The sequence is that of Large ribosomal subunit protein eL18 from Halobacterium salinarum (strain ATCC 29341 / DSM 671 / R1).